The primary structure comprises 350 residues: Derriere protein (350 aa).

The signal sequence occupies residues 1–16; the sequence is MLSLACFFSFLLMVKS. Residues 17–236 constitute a propeptide that is removed on maturation; that stretch reads SPLTFQERML…SSCKTPRAKR (220 aa). 2 N-linked (GlcNAc...) asparagine glycosylation sites follow: N171 and N202. 3 cysteine pairs are disulfide-bonded: C249–C315, C278–C347, and C282–C349.

The protein belongs to the TGF-beta family. In terms of assembly, homodimer; disulfide-linked. Also forms heterodimers with other TGF-beta family members including nodal2/nr-2 and bmp4.

It is found in the secreted. Required for posterior mesoderm formation during embryogenesis. Acts indirectly to suppress head formation by altering mesodermal patterning. Also involved in the establishment of left-right axis asymmetry, acting upstream of nodal/nr-1. Can exert long-range effects in the embryo. This Xenopus tropicalis (Western clawed frog) protein is Derriere protein.